A 236-amino-acid chain; its full sequence is Biosynthetic peptidoglycan transglycosylase (236 aa).

The chain crosses the membrane as a helical span at residues 12 to 31; the sequence is ALLWFVAGSIVLVLVFRWVP.

Belongs to the glycosyltransferase 51 family.

The protein resides in the cell inner membrane. The catalysed reaction is [GlcNAc-(1-&gt;4)-Mur2Ac(oyl-L-Ala-gamma-D-Glu-L-Lys-D-Ala-D-Ala)](n)-di-trans,octa-cis-undecaprenyl diphosphate + beta-D-GlcNAc-(1-&gt;4)-Mur2Ac(oyl-L-Ala-gamma-D-Glu-L-Lys-D-Ala-D-Ala)-di-trans,octa-cis-undecaprenyl diphosphate = [GlcNAc-(1-&gt;4)-Mur2Ac(oyl-L-Ala-gamma-D-Glu-L-Lys-D-Ala-D-Ala)](n+1)-di-trans,octa-cis-undecaprenyl diphosphate + di-trans,octa-cis-undecaprenyl diphosphate + H(+). It participates in cell wall biogenesis; peptidoglycan biosynthesis. Its function is as follows. Peptidoglycan polymerase that catalyzes glycan chain elongation from lipid-linked precursors. This is Biosynthetic peptidoglycan transglycosylase from Pseudomonas putida (strain ATCC 700007 / DSM 6899 / JCM 31910 / BCRC 17059 / LMG 24140 / F1).